A 126-amino-acid chain; its full sequence is Chorion class B protein M1768 (126 aa).

The tract at residues 1-17 is left arm; that stretch reads YGGLGYGGLGGGCGRGF. Residues 18–86 form a central domain region; that stretch reads SGGGLPVATA…GNGAVGITRE (69 aa). A right arm (Gly-rich tandem repeats) region spans residues 87–126; it reads GGFGYGAGYGDGYGLGFGGYGGGYGLGYGGYGGCGCSWGY.

The protein belongs to the chorion protein family.

Its function is as follows. This protein is one of many from the eggshell of the silk moth. This is Chorion class B protein M1768 from Bombyx mori (Silk moth).